The primary structure comprises 320 residues: Integrin-binding sialoprotein (320 aa).

An N-terminal signal peptide occupies residues 1 to 16; sequence MKTALILLCILGMASA. Ser-31, Ser-68, Ser-76, Ser-77, and Ser-96 each carry phosphoserine. 3 disordered regions span residues 60 to 117, 136 to 225, and 238 to 264; these read PVQG…VTAS, LPKK…RELT, and FQQT…VEYG. The segment covering 67–106 has biased composition (acidic residues); that stretch reads SSEENGDGDSSEEEGEEEETSNEEENNEDSEGNEDQEAEA. Asn-108 carries N-linked (GlcNAc...) asparagine glycosylation. The span at 139–152 shows a compositional bias: basic and acidic residues; it reads KAGDAEGKAPKMKE. A Phosphoserine modification is found at Ser-153. Over residues 153 to 176 the composition is skewed to acidic residues; that stretch reads SDEEEEEEEEEENENEEAEVDENE. Composition is skewed to polar residues over residues 177–188 and 249–261; these read QVVNGTSTNSTE and GTTS…SSTV. Residues Asn-180 and Asn-185 are each glycosylated (N-linked (GlcNAc...) asparagine). The short motif at 289–291 is the Integrin-binding motif element; it reads RGD. Sulfotyrosine is present on residues Tyr-316 and Tyr-317.

As to quaternary structure, monomer. Interacts with integrins; the interaction promotes cell adhesion.

It is found in the secreted. Binds tightly to hydroxyapatite. Appears to form an integral part of the mineralized matrix. Probably important to cell-matrix interaction. Promotes adhesion and migration of various cells via the alpha-V/beta-3 integrin receptor (ITGAV:ITGB3). The chain is Integrin-binding sialoprotein (Ibsp) from Rattus norvegicus (Rat).